Consider the following 1101-residue polypeptide: Rho guanine nucleotide exchange factor gef2 (1101 aa).

A disordered region spans residues 203-222 (EDSRKKTSSPSPSFASSKDA). Residues 210 to 219 (SSPSPSFASS) are compositionally biased toward low complexity. The region spanning 230 to 428 (KKKSLLIEMM…KNIAEMPTVD (199 aa)) is the DH domain. Phosphoserine is present on residues Ser736 and Ser977.

Its subcellular location is the cytoplasm. The protein localises to the cytoskeleton. It is found in the microtubule organizing center. It localises to the spindle pole body. Functionally, has a role in the control of cell polarity and cytokinesis. Involved in bipolar growth and septum formation. The polypeptide is Rho guanine nucleotide exchange factor gef2 (gef2) (Schizosaccharomyces pombe (strain 972 / ATCC 24843) (Fission yeast)).